A 435-amino-acid polypeptide reads, in one-letter code: 5-methylthioadenosine/S-adenosylhomocysteine deaminase (435 aa).

Residues His-65 and His-67 each contribute to the Zn(2+) site. Residues Glu-94, Arg-150, and His-189 each coordinate substrate. His-216 serves as a coordination point for Zn(2+). Residues Glu-219 and Asp-304 each coordinate substrate. Position 304 (Asp-304) interacts with Zn(2+).

Belongs to the metallo-dependent hydrolases superfamily. MTA/SAH deaminase family. Zn(2+) is required as a cofactor.

It carries out the reaction S-adenosyl-L-homocysteine + H2O + H(+) = S-inosyl-L-homocysteine + NH4(+). It catalyses the reaction S-methyl-5'-thioadenosine + H2O + H(+) = S-methyl-5'-thioinosine + NH4(+). Catalyzes the deamination of 5-methylthioadenosine and S-adenosyl-L-homocysteine into 5-methylthioinosine and S-inosyl-L-homocysteine, respectively. Is also able to deaminate adenosine. This chain is 5-methylthioadenosine/S-adenosylhomocysteine deaminase, found in Bacillus anthracis (strain A0248).